The chain runs to 243 residues: MTNSSLRPSGRRADQLRDVRITRHYTKHAEGAVLVEFGDTKVICTASVAERVPEFLRERGQGWLTAEYGMLPRATHTRSDREAARGKQTGRTQEIQRLIGRALRAVFDLNALGPRTLHLDCDVIQADGGTRTASITGAFVAAHDAVTKLVAAGRIARSPITDYVAAISVGVFGGTPVLDLDYDEDSACDTDMNVVMTGAGGFVEVQGTAEGAPFSRTEMNALLDLAQAGIGELVRLQRAALEA.

Residues Arg-91 and 129-131 each bind phosphate; that span reads GTR.

It belongs to the RNase PH family. As to quaternary structure, homohexameric ring arranged as a trimer of dimers.

The catalysed reaction is tRNA(n+1) + phosphate = tRNA(n) + a ribonucleoside 5'-diphosphate. Phosphorolytic 3'-5' exoribonuclease that plays an important role in tRNA 3'-end maturation. Removes nucleotide residues following the 3'-CCA terminus of tRNAs; can also add nucleotides to the ends of RNA molecules by using nucleoside diphosphates as substrates, but this may not be physiologically important. Probably plays a role in initiation of 16S rRNA degradation (leading to ribosome degradation) during starvation. The protein is Ribonuclease PH of Burkholderia mallei (strain NCTC 10247).